The sequence spans 301 residues: Probable alpha-L-glutamate ligase (301 aa).

One can recognise an ATP-grasp domain in the interval 104–287; that stretch reads LQLLSRRGIG…VAGMIIEHLE (184 aa). ATP is bound by residues Lys141, 178 to 179, Asp187, and 211 to 213; these read EY and RSN. Mg(2+) is bound by residues Asp248, Glu260, and Asn262. Mn(2+) contacts are provided by Asp248, Glu260, and Asn262.

Belongs to the RimK family. It depends on Mg(2+) as a cofactor. The cofactor is Mn(2+).

This is Probable alpha-L-glutamate ligase from Pseudomonas entomophila (strain L48).